A 283-amino-acid polypeptide reads, in one-letter code: Phosphatidylglycerol--prolipoprotein diacylglyceryl transferase (283 aa).

The next 4 membrane-spanning stretches (helical) occupy residues 17 to 37 (LAVR…TFLG), 56 to 76 (FLTW…VLFY), 92 to 112 (WEGG…IWLF), and 117 to 137 (GIGF…GLAS). R139 contacts a 1,2-diacyl-sn-glycero-3-phospho-(1'-sn-glycerol). The next 3 helical transmembrane spans lie at 194–214 (PSQL…VWLF), 222–242 (GQVA…AEFA), and 255–275 (GLSM…VGFV).

Belongs to the Lgt family.

It localises to the cell inner membrane. It catalyses the reaction L-cysteinyl-[prolipoprotein] + a 1,2-diacyl-sn-glycero-3-phospho-(1'-sn-glycerol) = an S-1,2-diacyl-sn-glyceryl-L-cysteinyl-[prolipoprotein] + sn-glycerol 1-phosphate + H(+). It functions in the pathway protein modification; lipoprotein biosynthesis (diacylglyceryl transfer). Its function is as follows. Catalyzes the transfer of the diacylglyceryl group from phosphatidylglycerol to the sulfhydryl group of the N-terminal cysteine of a prolipoprotein, the first step in the formation of mature lipoproteins. The sequence is that of Phosphatidylglycerol--prolipoprotein diacylglyceryl transferase from Neisseria meningitidis serogroup A / serotype 4A (strain DSM 15465 / Z2491).